Consider the following 265-residue polypeptide: Glutamate racemase (265 aa).

Substrate is bound by residues 9–10 (DS) and 41–42 (YG). Catalysis depends on cysteine 73, which acts as the Proton donor/acceptor. 74–75 (NT) contributes to the substrate binding site. Cysteine 180 acts as the Proton donor/acceptor in catalysis. 181 to 182 (TH) contributes to the substrate binding site.

Belongs to the aspartate/glutamate racemases family.

The catalysed reaction is L-glutamate = D-glutamate. It participates in cell wall biogenesis; peptidoglycan biosynthesis. In terms of biological role, provides the (R)-glutamate required for cell wall biosynthesis. This is Glutamate racemase from Aliivibrio salmonicida (strain LFI1238) (Vibrio salmonicida (strain LFI1238)).